We begin with the raw amino-acid sequence, 59 residues long: Large ribosomal subunit protein uL30 (59 aa).

The protein belongs to the universal ribosomal protein uL30 family. In terms of assembly, part of the 50S ribosomal subunit.

The protein is Large ribosomal subunit protein uL30 of Lactococcus lactis subsp. lactis (strain IL1403) (Streptococcus lactis).